Here is a 207-residue protein sequence, read N- to C-terminus: MARYLGPKAKLARREGTDLFLKSARRALSDKCKLDTKPGQHGRTSGSRTSDYGNQLREKQKVKRIYGVLERQFRRYFAEAERRKGNTGETLLQLLESRLDNVVYRMGFGSTRAEARQLVSHCAILLNGSPVNIPSIQVKPGDVVAIREKAKKQARITESLNLVGQMAAVTWVSVDAAKLEGTFKQVPDREDISGEINESLIVELYSR.

The disordered stretch occupies residues 31–54 (KCKLDTKPGQHGRTSGSRTSDYGN). Residues 42–53 (GRTSGSRTSDYG) show a composition bias toward polar residues. Residues 97-158 (SRLDNVVYRM…KAKKQARITE (62 aa)) form the S4 RNA-binding domain.

This sequence belongs to the universal ribosomal protein uS4 family. As to quaternary structure, part of the 30S ribosomal subunit. Contacts protein S5. The interaction surface between S4 and S5 is involved in control of translational fidelity.

One of the primary rRNA binding proteins, it binds directly to 16S rRNA where it nucleates assembly of the body of the 30S subunit. Its function is as follows. With S5 and S12 plays an important role in translational accuracy. This Polynucleobacter asymbioticus (strain DSM 18221 / CIP 109841 / QLW-P1DMWA-1) (Polynucleobacter necessarius subsp. asymbioticus) protein is Small ribosomal subunit protein uS4.